The chain runs to 4690 residues: Nonribosomal peptide synthetase sidN (4690 aa).

Residues Ala-238 to Lys-656 form an adenylation 1 region. A Carrier 1 domain is found at Ser-779 to Leu-856. Ser-816 carries the O-(pantetheine 4'-phosphoryl)serine modification. The tract at residues Pro-925–Phe-1175 is condensation 1. Positions Glu-1349–Arg-1760 are adenylation 2. A Carrier 2 domain is found at Pro-1889–Arg-1965. An O-(pantetheine 4'-phosphoryl)serine modification is found at Ser-1926. The condensation 2 stretch occupies residues Pro-2001–Val-2285. The interval Thr-2464 to Arg-2869 is adenylation 3. One can recognise a Carrier 3 domain in the interval Arg-3002–Lys-3079. Ser-3040 is subject to O-(pantetheine 4'-phosphoryl)serine. The interval Cys-3121–Thr-3530 is condensation 3. The Carrier 4 domain occupies Ser-3564 to Ser-3637. Residue Ser-3598 is modified to O-(pantetheine 4'-phosphoryl)serine. Positions Val-3679–Glu-4087 are condensation 4. The Carrier 5 domain occupies Ser-4119–Ser-4195. Residue Ser-4156 is modified to O-(pantetheine 4'-phosphoryl)serine. The interval Trp-4262–Asn-4589 is condensation 5.

Belongs to the NRP synthetase family.

It functions in the pathway siderophore biosynthesis. Its function is as follows. Nonribosomal peptide synthetase required for the biosynthetis of epichloenin A, an extracellular siderophore that plays a crucial role in endophyte-grass symbioses. SidN assembles epichloenin A by activating and incorporating three trans-anhydromevalonylhydroxyornithine (trans-AMHO), 1 glutamine and 4 glycine moieties. Trans-AMHO is produced from L-ornithine via 2 steps involving a L-ornithine N(5)-monooxygenase and an AHMO-N(5)-transacylase that have still to be identified. The third adenylation domain (A3) of sidN incorporates the hydroxamate groups of the siderophore which forms an octahedral iron complex. The other component amino acids are assembled by sidN adenylation domains A1 and A2. In Epichloe festucae (strain E2368), this protein is Nonribosomal peptide synthetase sidN.